Here is a 324-residue protein sequence, read N- to C-terminus: Tetrachlorobenzoquinone reductase (324 aa).

One can recognise an FAD-binding FR-type domain in the interval 5-107 (VSTIDMTVTQ…VPPANNFALV (103 aa)). The region spanning 238–324 (FTVVLARRSG…SKSPRLVLDI (87 aa)) is the 2Fe-2S ferredoxin-type domain. Positions 273, 278, 281, and 311 each coordinate [2Fe-2S] cluster.

Belongs to the PDR/VanB family. Homotrimer. FMN is required as a cofactor. It depends on [2Fe-2S] cluster as a cofactor.

It catalyses the reaction 2,3,5,6-tetrachlorohydroquinone + NAD(+) + H(+) = 2,3,5,6-tetrachloro-1,4-benzoquinone + NADH. It participates in xenobiotic degradation; pentachlorophenol degradation. In vitro, activated by tetrachlorohydroquinone (TCHQ) at low concentrations and inhibited at high concentrations (above 200 uM). However, PcpD would only be stimulated by tetrachlorohydroquinone (TCHQ) under in vivo conditions due to the toxicity of tetrachlorohydroquinone (TCHQ). Competitively inhibited by pentachlorophenol (PCP) in a concentration-dependent manner. PcpD is regulated by tetrachlorohydroquinone (TCHQ) and pentachlorophenol (PCP) using a mechanism, which maintains tetrachlorobenzoquinone at a level that would neither significantly decrease the biodegradation of pentachlorophenol (PCP) nor cause cytotoxicity in cells. In terms of biological role, involved in the degradation of the xenobiocide pentachlorophenol (PCP). Catalyzes the reduction of tetrachlorobenzoquinone (TCBQ) to yield tetrachlorohydroquinone (TCHQ). Also able to reduce 2,6-dichloroindophenol (DCIP). This is Tetrachlorobenzoquinone reductase from Sphingobium chlorophenolicum.